The primary structure comprises 398 residues: Tryptophan synthase beta chain (398 aa).

Lysine 88 is subject to N6-(pyridoxal phosphate)lysine.

Belongs to the TrpB family. Tetramer of two alpha and two beta chains. Requires pyridoxal 5'-phosphate as cofactor.

It carries out the reaction (1S,2R)-1-C-(indol-3-yl)glycerol 3-phosphate + L-serine = D-glyceraldehyde 3-phosphate + L-tryptophan + H2O. The protein operates within amino-acid biosynthesis; L-tryptophan biosynthesis; L-tryptophan from chorismate: step 5/5. The beta subunit is responsible for the synthesis of L-tryptophan from indole and L-serine. The polypeptide is Tryptophan synthase beta chain (Haemophilus influenzae (strain PittGG)).